Here is a 425-residue protein sequence, read N- to C-terminus: Glutamyl-tRNA reductase (425 aa).

Residues 49 to 52 (TCNR), Ser-107, 112 to 114 (EPQ), and Gln-118 each bind substrate. The active-site Nucleophile is the Cys-50. Position 187 to 192 (187 to 192 (GAGETI)) interacts with NADP(+).

The protein belongs to the glutamyl-tRNA reductase family. Homodimer.

The enzyme catalyses (S)-4-amino-5-oxopentanoate + tRNA(Glu) + NADP(+) = L-glutamyl-tRNA(Glu) + NADPH + H(+). Its pathway is porphyrin-containing compound metabolism; protoporphyrin-IX biosynthesis; 5-aminolevulinate from L-glutamyl-tRNA(Glu): step 1/2. In terms of biological role, catalyzes the NADPH-dependent reduction of glutamyl-tRNA(Glu) to glutamate 1-semialdehyde (GSA). The polypeptide is Glutamyl-tRNA reductase (Pseudomonas putida (strain W619)).